The sequence spans 332 residues: Melanocortin receptor 4 (332 aa).

Residues 1–43 lie on the Extracellular side of the membrane; it reads MNSTQPLGMHTSLHSWNRSAHGMPTNVSESLAKGYSDGGCYEQ. N2, N17, and N26 each carry an N-linked (GlcNAc...) asparagine glycan. 2 disulfide bridges follow: C40–C279 and C271–C277. A helical membrane pass occupies residues 44 to 69; sequence LFVSPEVFVTLGVISLLENILVIVAI. The Cytoplasmic portion of the chain corresponds to 70–81; it reads AKNKNLHSPMYF. The helical transmembrane segment at 82–106 threads the bilayer; it reads FICSLAVADMLVSVSNGSETIVITL. The Ca(2+) site is built by E100, D122, and D126. The Extracellular segment spans residues 107 to 123; sequence LNSTDTDAQSFTVDIDN. Residues 124 to 145 traverse the membrane as a helical segment; that stretch reads VIDSVICSSLLASICSLLSIAV. Residues 146–165 lie on the Cytoplasmic side of the membrane; sequence DRYFTIFYALQYHNIMTVKR. The chain crosses the membrane as a helical span at residues 166–186; sequence VAITISAIWAACTVSGVLFII. Over 187 to 191 the chain is Extracellular; it reads YSDSS. A helical transmembrane segment spans residues 192 to 215; the sequence is AVIICLITVFFTMLALMASLYVHM. Residues 216–248 are Cytoplasmic-facing; sequence FLMARLHIKRIAVLPGSGTIRQGANMKGAITLT. A helical membrane pass occupies residues 249 to 271; sequence ILIGVFVVCWAPFFLHLIFYISC. Topologically, residues 272–280 are extracellular; sequence PQNPYCVCF. The chain crosses the membrane as a helical span at residues 281 to 304; the sequence is MSHFNLYLILIMCNSIIDPLIYAL. Residues 305 to 332 lie on the Cytoplasmic side of the membrane; that stretch reads RSQELRKTFKEIICCSPLGGLCDLSSRY. C318 carries S-palmitoyl cysteine lipidation.

The protein belongs to the G-protein coupled receptor 1 family. Homodimer; disulfide-linked, also forms higher order oligomers. Interacts with GNAS. Interacts with ATRNL1. Interacts with MGRN1; this interaction competes with GNAS-binding and thus inhibits agonist-induced cAMP production. Interacts with MRAP and MRAP2; these associated factors increase ligand-sensitivity and generation of cAMP.

It is found in the cell membrane. In terms of biological role, hormone receptor that acts as a key component of the leptin-melanocortin pathway at the intersection of homeostatic maintenance of energetic state. Plays a role in regulating food intake: activation by a stimulating hormone such as anorexigenic alpha-melanocyte stimulating hormone (alpha-MSH) inhibits appetite, whereas binding to a natural antagonist like Agouti-related protein/AGRP promotes appetite. G-protein-coupled receptor that activates conventional Galphas signaling leading to induction of anorexogenic signaling in the hypothalamus to result in negative energy balance. Regulates the firing activity of neurons from the hypothalamus by alpha-MSH and AGRP independently of Galphas signaling by ligand-induced coupling of closure of inwardly rectifying potassium channel KCNJ13. In intestinal epithelial cells, plays a role in the inhibition of hepatic glucose production via nesfatin-1/NUCB2 leading to increased cyclic adenosine monophosphate (cAMP) levels and glucagon-like peptide 1 (GLP-1) secretion in the intestinal epithelium. This chain is Melanocortin receptor 4 (MC4R), found in Bos taurus (Bovine).